Consider the following 143-residue polypeptide: HTH-type transcriptional regulator BudR (143 aa).

One can recognise an HTH lysR-type domain in the interval 1–58 (MELRYLRYFVAVARERHFTRAAKALGISQPPLSQQIKRLEEEVGTPLFRRLTRGVELT). Residues 18-37 (FTRAAKALGISQPPLSQQIK) constitute a DNA-binding region (H-T-H motif).

Belongs to the LysR transcriptional regulatory family.

Its function is as follows. Regulator of the budABC operon for 2,3-butanediol synthesis. This chain is HTH-type transcriptional regulator BudR (budR), found in Klebsiella aerogenes (Enterobacter aerogenes).